Here is a 134-residue protein sequence, read N- to C-terminus: uncharacterized protein (134 aa).

The HIT domain maps to 4 to 107; it reads IFTKIINREL…PTHSLSNFSF (104 aa). A Histidine triad motif motif is present at residues 91-95; that stretch reads HLHIH.

This is an uncharacterized protein from Mycobacterium leprae (strain TN).